An 89-amino-acid chain; its full sequence is Small ribosomal subunit protein bS20 (89 aa).

The interval 68–89 (PNKGARKSSRLDHFVNEQKSKQ) is disordered. Basic and acidic residues predominate over residues 76 to 89 (SRLDHFVNEQKSKQ).

This sequence belongs to the bacterial ribosomal protein bS20 family.

In terms of biological role, binds directly to 16S ribosomal RNA. The chain is Small ribosomal subunit protein bS20 from Mycoplasmopsis agalactiae (strain NCTC 10123 / CIP 59.7 / PG2) (Mycoplasma agalactiae).